Here is a 373-residue protein sequence, read N- to C-terminus: MPRPIHAVIHQPALANNLDIIRGKAPESRIWAVVKANAYGHGIRRVFAALRGADGFGLLDLNEAVLLRDLGWQGPILLLEGFFQPQDVAVIEQYRLTTAIHCDEQLRMLESARAKGPLAIQLKLNTGMNRLGFHPAAYRTAWERARAMPCVGSIVHMTHFSDADSARGVAHQIEAFDAATANLPGEASLSNSAAVLWHPQAHRAWVRPGIILYGASPTGRDADIAGTGLQPAMSLHSELISVQDLQPGDTVGYGSLFTAERPMRIGVVACGYADGYPRHASGWGEQRAPVLVDGVRTELVGRVSMDMLCVDLTPCPKARVGSPVTLWGQGLPIDEVAQASGTVGYELMCALAPRVPTSVATITASDSAAPAVA.

Lys-35 acts as the Proton acceptor; specific for D-alanine in catalysis. Lys-35 carries the post-translational modification N6-(pyridoxal phosphate)lysine. Substrate is bound at residue Arg-130. The Proton acceptor; specific for L-alanine role is filled by Tyr-253. Met-305 lines the substrate pocket.

Belongs to the alanine racemase family. The cofactor is pyridoxal 5'-phosphate.

The enzyme catalyses L-alanine = D-alanine. It functions in the pathway amino-acid biosynthesis; D-alanine biosynthesis; D-alanine from L-alanine: step 1/1. Catalyzes the interconversion of L-alanine and D-alanine. May also act on other amino acids. This is Alanine racemase (alr) from Cupriavidus necator (strain ATCC 17699 / DSM 428 / KCTC 22496 / NCIMB 10442 / H16 / Stanier 337) (Ralstonia eutropha).